The sequence spans 217 residues: MAWFFAPEPVMVTADEALKGGRHPVLENPAPHTVLGTPVTGPWKEGQQRIWIGLGCFWGVEQMYWQMDGVEGTSVGYAGGFTPNPTYREVCSGRTGHTEIVEVVYDPSKISLEQLVARGLEAHDPTQGFRQGNDVGTQYRSAYYTENEEDAARVKAVVDAYGETLKQHGFGEITTEIGVISPSEYFLAEDYHQQYLDKNPDGYCPHHSTGIPCGVEA.

Cys-56 is an active-site residue.

Belongs to the MsrA Met sulfoxide reductase family.

It catalyses the reaction L-methionyl-[protein] + [thioredoxin]-disulfide + H2O = L-methionyl-(S)-S-oxide-[protein] + [thioredoxin]-dithiol. It carries out the reaction [thioredoxin]-disulfide + L-methionine + H2O = L-methionine (S)-S-oxide + [thioredoxin]-dithiol. In terms of biological role, has an important function as a repair enzyme for proteins that have been inactivated by oxidation. Catalyzes the reversible oxidation-reduction of methionine sulfoxide in proteins to methionine. In Corynebacterium glutamicum (strain R), this protein is Peptide methionine sulfoxide reductase MsrA.